Consider the following 225-residue polypeptide: UPF0758 protein Spea_3837 (225 aa).

The 123-residue stretch at Ile102 to Ile224 folds into the MPN domain. Zn(2+)-binding residues include His173, His175, and Asp186. The JAMM motif motif lies at His173–Asp186.

It belongs to the UPF0758 family.

The chain is UPF0758 protein Spea_3837 from Shewanella pealeana (strain ATCC 700345 / ANG-SQ1).